The following is a 217-amino-acid chain: Large ribosomal subunit protein uL1 (217 aa).

It belongs to the universal ribosomal protein uL1 family.

This chain is Large ribosomal subunit protein uL1 (RPL10A), found in Candida glabrata (strain ATCC 2001 / BCRC 20586 / JCM 3761 / NBRC 0622 / NRRL Y-65 / CBS 138) (Yeast).